We begin with the raw amino-acid sequence, 534 residues long: CTP synthase (534 aa).

The segment at methionine 1–leucine 267 is amidoligase domain. Serine 13 contacts CTP. Residue serine 13 coordinates UTP. Serine 14–isoleucine 19 is a binding site for ATP. Residue tyrosine 54 coordinates L-glutamine. Position 71 (aspartate 71) interacts with ATP. Mg(2+) is bound by residues aspartate 71 and glutamate 141. Residues aspartate 148 to glutamate 150, lysine 188 to glutamine 193, and lysine 224 contribute to the CTP site. UTP is bound by residues lysine 188–glutamine 193 and lysine 224. Residues lysine 292 to lysine 534 enclose the Glutamine amidotransferase type-1 domain. L-glutamine is bound at residue glycine 354. The active-site Nucleophile; for glutamine hydrolysis is the cysteine 381. Residues leucine 382–glutamine 385, glutamate 405, and arginine 463 each bind L-glutamine. Catalysis depends on residues histidine 508 and glutamate 510.

The protein belongs to the CTP synthase family. Homotetramer.

The catalysed reaction is UTP + L-glutamine + ATP + H2O = CTP + L-glutamate + ADP + phosphate + 2 H(+). It carries out the reaction L-glutamine + H2O = L-glutamate + NH4(+). It catalyses the reaction UTP + NH4(+) + ATP = CTP + ADP + phosphate + 2 H(+). The protein operates within pyrimidine metabolism; CTP biosynthesis via de novo pathway; CTP from UDP: step 2/2. Allosterically activated by GTP, when glutamine is the substrate; GTP has no effect on the reaction when ammonia is the substrate. The allosteric effector GTP functions by stabilizing the protein conformation that binds the tetrahedral intermediate(s) formed during glutamine hydrolysis. Inhibited by the product CTP, via allosteric rather than competitive inhibition. Functionally, catalyzes the ATP-dependent amination of UTP to CTP with either L-glutamine or ammonia as the source of nitrogen. Regulates intracellular CTP levels through interactions with the four ribonucleotide triphosphates. The chain is CTP synthase from Streptococcus thermophilus (strain ATCC BAA-250 / LMG 18311).